The chain runs to 305 residues: UDP-N-acetylenolpyruvoylglucosamine reductase 2 (305 aa).

The region spanning 33 to 197 (VGGKADVFVA…LEARFELEEG (165 aa)) is the FAD-binding PCMH-type domain. Residue Arg176 is part of the active site. Ser226 acts as the Proton donor in catalysis. Residue Glu296 is part of the active site.

The protein belongs to the MurB family. FAD is required as a cofactor.

The protein localises to the cytoplasm. The catalysed reaction is UDP-N-acetyl-alpha-D-muramate + NADP(+) = UDP-N-acetyl-3-O-(1-carboxyvinyl)-alpha-D-glucosamine + NADPH + H(+). The protein operates within cell wall biogenesis; peptidoglycan biosynthesis. Functionally, cell wall formation. The sequence is that of UDP-N-acetylenolpyruvoylglucosamine reductase 2 from Bacillus cereus (strain ZK / E33L).